The following is a 483-amino-acid chain: Bifunctional pantoate ligase/cytidylate kinase (483 aa).

Residues 1 to 246 (MPTMGALHAG…CGSTRLIDHA (246 aa)) are pantoate--beta-alanine ligase. 4-11 (MGALHAGH) is an ATP binding site. The Proton donor role is filled by histidine 11. Glutamine 34 is a (R)-pantoate binding site. Glutamine 34 contributes to the beta-alanine binding site. 124 to 127 (GEKD) lines the ATP pocket. (R)-pantoate is bound at residue glutamine 130. ATP-binding positions include valine 153 and 161–164 (LSSR). The segment at 247-483 (FLMTRQPLVA…AEEAWPTPQR (237 aa)) is cytidylate kinase.

It in the N-terminal section; belongs to the pantothenate synthetase family. This sequence in the C-terminal section; belongs to the cytidylate kinase family. Type 1 subfamily.

Its subcellular location is the cytoplasm. The catalysed reaction is (R)-pantoate + beta-alanine + ATP = (R)-pantothenate + AMP + diphosphate + H(+). It catalyses the reaction CMP + ATP = CDP + ADP. The enzyme catalyses dCMP + ATP = dCDP + ADP. The protein operates within cofactor biosynthesis; (R)-pantothenate biosynthesis; (R)-pantothenate from (R)-pantoate and beta-alanine: step 1/1. Its function is as follows. Catalyzes the condensation of pantoate with beta-alanine in an ATP-dependent reaction via a pantoyl-adenylate intermediate. Catalyzes the transfer of a phosphate group from ATP to either CMP or dCMP to form CDP or dCDP and ADP, respectively. This chain is Bifunctional pantoate ligase/cytidylate kinase, found in Synechococcus sp. (strain CC9902).